The following is a 254-amino-acid chain: Bacteriorhodopsin-I (254 aa).

A propeptide spanning residues Met1–Leu6 is cleaved from the precursor. The residue at position 7 (Gln7) is a Pyrrolidone carboxylic acid. Transmembrane regions (helical) follow at residues Glu16–Ala36, Val51–Phe71, Tyr91–Ala111, Ile116–Thr136, Ala144–Phe164, Ile185–Ala205, and Glu212–Leu232. Lys224 is modified (N6-(retinylidene)lysine).

This sequence belongs to the archaeal/bacterial/fungal opsin family. The covalent binding of retinal to the apoprotein, bacterioopsin, generates bacteriorhodopsin.

The protein localises to the cell membrane. Functionally, light-driven proton pump. The protein is Bacteriorhodopsin-I (bop1) of Haloquadratum walsbyi (strain DSM 16854 / JCM 12705 / C23).